Reading from the N-terminus, the 192-residue chain is Threonylcarbamoyl-AMP synthase (192 aa).

Residues 5–192 (TTSVAEAAHC…DATTGRVIRD (188 aa)) enclose the YrdC-like domain.

This sequence belongs to the SUA5 family. TsaC subfamily.

It localises to the cytoplasm. The catalysed reaction is L-threonine + hydrogencarbonate + ATP = L-threonylcarbamoyladenylate + diphosphate + H2O. Required for the formation of a threonylcarbamoyl group on adenosine at position 37 (t(6)A37) in tRNAs that read codons beginning with adenine. Catalyzes the conversion of L-threonine, HCO(3)(-)/CO(2) and ATP to give threonylcarbamoyl-AMP (TC-AMP) as the acyladenylate intermediate, with the release of diphosphate. The chain is Threonylcarbamoyl-AMP synthase from Acinetobacter baylyi (strain ATCC 33305 / BD413 / ADP1).